A 395-amino-acid chain; its full sequence is Immunity-related GTPase family M protein 2 (395 aa).

The region spanning 63–239 (NKIKIAVTGD…PKLRETLQKD (177 aa)) is the IRG-type G domain. GTP contacts are provided by residues 72 to 79 (DSGNGMSS), 97 to 101 (TGVVR), and 179 to 181 (KLD).

The protein belongs to the TRAFAC class dynamin-like GTPase superfamily. IRG family. Ubiquitinated; polyubiquitinated in the cytosol, promoting Gbp1 recruitment to the T.gondii parasitophorous vacuole membranes.

Its subcellular location is the cytoplasmic vesicle membrane. It localises to the golgi apparatus membrane. The protein resides in the cytoplasm. It is found in the cytosol. The catalysed reaction is GTP + H2O = GDP + phosphate + H(+). In terms of biological role, immunity-related GTPase that plays important roles in innate immunity and inflammatory response. Acts as a dynamin-like protein that binds to intracellular membranes and promotes remodeling and trafficking of those membranes. Required for clearance of acute protozoan and bacterial infections. Acts by participating to Tgtp1/Irgb6 and Gbp1-mediated parasite killing by promoting their accumulation on the T.gondii parasitophorous vacuole membranes. Also required for prolonged loading of ubiquitin and p62/Sqstm1 to parasitophorous vacuole membranes. Also acts as a key negative regulator of the inflammatory response by inhibiting the non-canonical inflammasome, thereby protecting against Casp11-driven septic shock during endotoxemia. The protein is Immunity-related GTPase family M protein 2 of Mus musculus (Mouse).